A 543-amino-acid polypeptide reads, in one-letter code: Organic anion transporter 3 (543 aa).

The Cytoplasmic segment spans residues 1–21 (MTFAELVDRVGSKGPFQLLHT). Residues 22–42 (VLLGLPILGMANHNLLQIFTA) traverse the membrane as a helical segment. Over 43–124 (PTPAHHCRPP…LVCSSSKLKE (82 aa)) the chain is Extracellular. Residue Asn81 is glycosylated (N-linked (GlcNAc...) asparagine). The chain crosses the membrane as a helical span at residues 125–145 (MAQSVFMAGILVGGLVLGALS). Topologically, residues 146-151 (DRFGRK) are cytoplasmic. A helical transmembrane segment spans residues 152-172 (PILIFSYLLLGASGSGAAFSP). Topologically, residues 173–181 (TFSIYAVFR) are extracellular. A helical membrane pass occupies residues 182-202 (FLCGFSISGISLSTAILNVEW). The Cytoplasmic portion of the chain corresponds to 203–212 (VSTRFRAIKS). Residues 213-233 (IAVGFFYTFGQFILPGLAYAI) traverse the membrane as a helical segment. The Extracellular portion of the chain corresponds to 234-237 (PQWR). Residues 238-258 (WLQLTVSVPFLTFFLLSWWLP) traverse the membrane as a helical segment. Over 259–328 (ESIRWMVLSG…FRTPVLRRVT (70 aa)) the chain is Cytoplasmic. The chain crosses the membrane as a helical span at residues 329-349 (LCLSLAWFATGFAYYSLAMGV). At 350-355 (EEFGVN) the chain is on the extracellular side. The helical transmembrane segment at 356–376 (LYVLQLIFGGVDVPAKFITML) threads the bilayer. At 377–388 (SISYLGRHITEG) the chain is on the cytoplasmic side. The chain crosses the membrane as a helical span at residues 389–409 (IVLLLAGGCILALIFVPLDLM). Residues 410-412 (TLR) lie on the Extracellular side of the membrane. A helical transmembrane segment spans residues 413–433 (TVLAVFGKGCLSGSFSCLFLY). At 434–472 (TSELYPTVIRQTGMGASNLWARVGSMTAPLVKITGELQP) the chain is on the cytoplasmic side. Residues 473–493 (FIPNIIFGTIALLGGSAALFL) form a helical membrane-spanning segment. Topologically, residues 494–543 (PETLNRPLPETIEDIETWSLRAKEPKPEPEAEKSSQRIPLQPCEPGPGPS) are extracellular. Residues 513 to 543 (LRAKEPKPEPEAEKSSQRIPLQPCEPGPGPS) are disordered. Positions 514–528 (RAKEPKPEPEAEKSS) are enriched in basic and acidic residues.

The protein belongs to the major facilitator (TC 2.A.1) superfamily. Organic cation transporter (TC 2.A.1.19) family. Expressed in kidney.

It is found in the basolateral cell membrane. It catalyses the reaction estrone 3-sulfate(out) + glutarate(in) = estrone 3-sulfate(in) + glutarate(out). It carries out the reaction estrone 3-sulfate(in) + 2-oxoglutarate(out) = estrone 3-sulfate(out) + 2-oxoglutarate(in). The enzyme catalyses glutarate(in) + 2-oxoglutarate(out) = glutarate(out) + 2-oxoglutarate(in). The catalysed reaction is urate(in) + 2-oxoglutarate(out) = urate(out) + 2-oxoglutarate(in). It catalyses the reaction taurocholate(out) + glutarate(in) = taurocholate(in) + glutarate(out). It carries out the reaction dehydroepiandrosterone 3-sulfate(out) + glutarate(in) = dehydroepiandrosterone 3-sulfate(in) + glutarate(out). The enzyme catalyses prostaglandin F2alpha(out) + glutarate(in) = prostaglandin F2alpha(in) + glutarate(out). The catalysed reaction is prostaglandin F2alpha(out) + 2-oxoglutarate(in) = prostaglandin F2alpha(in) + 2-oxoglutarate(out). It catalyses the reaction (R)-carnitine(out) + 2-oxoglutarate(in) = (R)-carnitine(in) + 2-oxoglutarate(out). It carries out the reaction glutarate(in) + (R)-carnitine(out) = glutarate(out) + (R)-carnitine(in). The enzyme catalyses prostaglandin E2(out) + 2-oxoglutarate(in) = prostaglandin E2(in) + 2-oxoglutarate(out). The catalysed reaction is prostaglandin E2(out) + glutarate(in) = prostaglandin E2(in) + glutarate(out). It catalyses the reaction urate(in) + glutarate(out) = urate(out) + glutarate(in). It carries out the reaction taurocholate(out) + 2-oxoglutarate(in) = taurocholate(in) + 2-oxoglutarate(out). The enzyme catalyses dehydroepiandrosterone 3-sulfate(out) + 2-oxoglutarate(in) = dehydroepiandrosterone 3-sulfate(in) + 2-oxoglutarate(out). The catalysed reaction is kynurenate(out) + a dicarboxylate(in) = kynurenate(in) + a dicarboxylate(out). It catalyses the reaction (indol-3-yl)acetate(out) + a dicarboxylate(in) = (indol-3-yl)acetate(in) + a dicarboxylate(out). It carries out the reaction indoxyl sulfate(out) + a dicarboxylate(in) = indoxyl sulfate(in) + a dicarboxylate(out). The enzyme catalyses N-benzoylglycine(out) + a dicarboxylate(in) = N-benzoylglycine(in) + a dicarboxylate(out). The catalysed reaction is 3-carboxy-4-methyl-5-propyl-2-furanpropanoate(out) + a dicarboxylate(in) = 3-carboxy-4-methyl-5-propyl-2-furanpropanoate(in) + a dicarboxylate(out). It catalyses the reaction (6R)-L-erythro-5,6,7,8-tetrahydrobiopterin(out) + a dicarboxylate(in) = (6R)-L-erythro-5,6,7,8-tetrahydrobiopterin(in) + a dicarboxylate(out). It carries out the reaction L-erythro-7,8-dihydrobiopterin(out) + a dicarboxylate(in) = L-erythro-7,8-dihydrobiopterin(in) + a dicarboxylate(out). The enzyme catalyses L-sepiapterin(out) + a dicarboxylate(in) = L-sepiapterin(in) + a dicarboxylate(out). Functions as an organic anion/dicarboxylate exchanger that couples organic anion uptake indirectly to the sodium gradient. Transports organic anions such as estrone 3-sulfate (E1S) and urate in exchange for dicarboxylates such as glutarate or ketoglutarate (2-oxoglutarate). Plays an important role in the excretion of endogenous and exogenous organic anions, especially from the kidney and the brain. E1S transport is pH- and chloride-dependent and may also involve E1S/cGMP exchange. Responsible for the transport of prostaglandin E2 (PGE2) and prostaglandin F2(alpha) (PGF2(alpha)) in the basolateral side of the renal tubule. Involved in the transport of neuroactive tryptophan metabolites kynurenate and xanthurenate. Functions as a biopterin transporters involved in the uptake and the secretion of coenzymes tetrahydrobiopterin (BH4), dihydrobiopterin (BH2) and sepiapterin to urine, thereby determining baseline levels of blood biopterins. May be involved in the basolateral transport of steviol, a metabolite of the popular sugar substitute stevioside. May participate in the detoxification/ renal excretion of drugs and xenobiotics, such as the histamine H(2)-receptor antagonists fexofenadine and cimetidine, the antibiotic benzylpenicillin (PCG), the anionic herbicide 2,4-dichloro-phenoxyacetate (2,4-D), the diagnostic agent p-aminohippurate (PAH), the antiviral acyclovir (ACV), and the mycotoxin ochratoxin (OTA), by transporting these exogenous organic anions across the cell membrane in exchange for dicarboxylates such as 2-oxoglutarate. Contributes to the renal uptake of potent uremic toxins (indoxyl sulfate (IS), indole acetate (IA), hippurate/N-benzoylglycine (HA) and 3-carboxy-4-methyl-5-propyl-2-furanpropionate (CMPF)), pravastatin, PCG, E1S and dehydroepiandrosterone sulfate (DHEAS), and is partly involved in the renal uptake of temocaprilat (an angiotensin-converting enzyme (ACE) inhibitor). May contribute to the release of cortisol in the adrenals. Involved in one of the detoxification systems on the choroid plexus (CP), removes substrates such as E1S or taurocholate (TC), PCG, 2,4-D and PAH, from the cerebrospinal fluid (CSF) to the blood for eventual excretion in urine and bile. Also contributes to the uptake of several other organic compounds such as the prostanoids prostaglandin E(2) and prostaglandin F(2-alpha), L-carnitine, and the therapeutic drugs allopurinol, 6-mercaptopurine (6-MP) and 5-fluorouracil (5-FU). Mediates the transport of PAH, PCG, and the statins pravastatin and pitavastatin, from the cerebrum into the blood circulation across the blood-brain barrier (BBB). In summary, plays a role in the efflux of drugs and xenobiotics, helping reduce their undesired toxicological effects on the body. This Sus scrofa (Pig) protein is Organic anion transporter 3 (SLC22A8).